A 350-amino-acid polypeptide reads, in one-letter code: MRQLAELLTDLLGPVPTMFLWVIVSFAFFRALQFIVRWYLFGKWTWPNFNFFDIRNRIRRRRRGGQEAENTENPPENEAEAGEQVEQEPEPDSRDLSAIPPNKKWRISNECVSLFHSVISGLWAAYALLYYKQLVQDLVNYRCDVAINLVLMSAGYLFHDLVDLLVNEQSARIIELLFHHVVVLSAFAVTMFFNRFLGVVVFGLLMELNSIFLHSRSLLNLYGVDKKSPSFRIIALLNMVTLFAFRLCVSAYLVYFVVVSIPDLEWYVSIINGLVIASLASTNTVLTYRLLAADGLLGSRRTRRTPAATAETQVGDVESGPLRTQVEDEDHHTIGVQTIHGTTEDATQTV.

Residues 9–29 traverse the membrane as a helical segment; sequence TDLLGPVPTMFLWVIVSFAFF. The tract at residues 65–100 is disordered; the sequence is GQEAENTENPPENEAEAGEQVEQEPEPDSRDLSAIP. The span at 75–90 shows a compositional bias: acidic residues; the sequence is PENEAEAGEQVEQEPE. The TLC domain maps to 102 to 279; sequence NKKWRISNEC…IINGLVIASL (178 aa). Helical transmembrane passes span 111 to 131, 145 to 165, 173 to 193, 195 to 215, 229 to 249, and 270 to 292; these read CVSLFHSVISGLWAAYALLYY, VAINLVLMSAGYLFHDLVDLL, IIELLFHHVVVLSAFAVTMFF, RFLGVVVFGLLMELNSIFLHS, PSFRIIALLNMVTLFAFRLCV, and IINGLVIASLASTNTVLTYRLLA.

In terms of tissue distribution, ubiquitously expressed.

The protein localises to the cell membrane. Its function is as follows. Regulates the composition and fluidity of the plasma membrane. Inhibits the incorporation of membrane-fluidizing phospholipids containing omega-3 long-chain polyunsaturated fatty acids (LCPUFA) and thereby promotes membrane rigidity. Does not appear to have any effect on LCPUFA synthesis. The chain is TLC domain-containing protein fld-1 from Caenorhabditis elegans.